A 240-amino-acid polypeptide reads, in one-letter code: Bactofilin BacP (240 aa).

The tract at residues D116–R240 is interacts with PadC. A disordered region spans residues V117–R240. Positions R126 to A150 are enriched in low complexity. Pro residues predominate over residues R151–P173. The span at A229–R240 shows a compositional bias: basic residues.

The protein belongs to the bactofilin family. In terms of assembly, interacts with BacN and probably also BacO, the 3 proteins colocalize as an extended structure. Interacts with PadC.

It is found in the cytoplasm. The protein localises to the cytoskeleton. Its function is as follows. A non-essential component of the chromosome segregation machinery. Positions the ParA-ParB-parS chromosome segregation machinery within the cell; BacP seems to be the most important bactofilin in this process. Forms a heteropolymeric, subpolar scaffold in the cell; BacP probably forms the core, BacO contributes to position and integrity while BacN does not seem to contribute to assembly. This chain is Bactofilin BacP, found in Myxococcus xanthus (strain DK1622).